A 245-amino-acid chain; its full sequence is NAD-dependent protein deacylase (245 aa).

Residues 1–245 (MEAVWESARI…RLSRAMGIDI (245 aa)) form the Deacetylase sirtuin-type domain. 22–41 (GAGISAESGIPTFRGKDGLW) provides a ligand contact to NAD(+). Substrate contacts are provided by Y66 and R69. NAD(+) is bound at residue 100–103 (QNVD). H118 functions as the Proton acceptor in the catalytic mechanism. Positions 126, 129, 146, and 149 each coordinate Zn(2+). NAD(+)-binding positions include 186-188 (GTS), 212-214 (NPE), and M241.

The protein belongs to the sirtuin family. Class III subfamily. It depends on Zn(2+) as a cofactor.

The protein localises to the cytoplasm. The enzyme catalyses N(6)-acetyl-L-lysyl-[protein] + NAD(+) + H2O = 2''-O-acetyl-ADP-D-ribose + nicotinamide + L-lysyl-[protein]. The catalysed reaction is N(6)-succinyl-L-lysyl-[protein] + NAD(+) + H2O = 2''-O-succinyl-ADP-D-ribose + nicotinamide + L-lysyl-[protein]. NAD-dependent lysine deacetylase and desuccinylase that specifically removes acetyl and succinyl groups on target proteins. Modulates the activities of several proteins which are inactive in their acylated form. Deacetylates the N-terminal lysine residue of Alba, the major archaeal chromatin protein and that, in turn, increases Alba's DNA binding affinity, thereby repressing transcription. The protein is NAD-dependent protein deacylase of Aeropyrum pernix (strain ATCC 700893 / DSM 11879 / JCM 9820 / NBRC 100138 / K1).